The primary structure comprises 360 residues: Ribosomal RNA large subunit methyltransferase M (360 aa).

Residues Ser-192, Ala-225–Gly-228, Asp-244, Asp-264, and Asp-280 contribute to the S-adenosyl-L-methionine site. Lys-309 (proton acceptor) is an active-site residue.

It belongs to the class I-like SAM-binding methyltransferase superfamily. RNA methyltransferase RlmE family. RlmM subfamily. As to quaternary structure, monomer.

It localises to the cytoplasm. It carries out the reaction cytidine(2498) in 23S rRNA + S-adenosyl-L-methionine = 2'-O-methylcytidine(2498) in 23S rRNA + S-adenosyl-L-homocysteine + H(+). Catalyzes the 2'-O-methylation at nucleotide C2498 in 23S rRNA. This is Ribosomal RNA large subunit methyltransferase M from Alkalilimnicola ehrlichii (strain ATCC BAA-1101 / DSM 17681 / MLHE-1).